The chain runs to 51 residues: Large ribosomal subunit protein eL39y (51 aa).

The segment at 1-21 (MPSHKSFMIKKKLGKKMRQNR) is disordered. Residues 7-19 (FMIKKKLGKKMRQ) are compositionally biased toward basic residues.

Belongs to the eukaryotic ribosomal protein eL39 family.

This is Large ribosomal subunit protein eL39y (RPL39B) from Arabidopsis thaliana (Mouse-ear cress).